We begin with the raw amino-acid sequence, 295 residues long: Phosphoenolpyruvate phosphomutase (295 aa).

Catalysis depends on Asp58, which acts as the Nucleophile. Residue Asp58 participates in Mg(2+) binding.

This sequence belongs to the isocitrate lyase/PEP mutase superfamily. PEP mutase family. As to quaternary structure, homotetramer. Mg(2+) serves as cofactor.

It carries out the reaction phosphoenolpyruvate + H(+) = 3-phosphonopyruvate. It functions in the pathway phosphorus metabolism; phosphonate biosynthesis. In terms of biological role, formation of a carbon-phosphorus bond by converting phosphoenolpyruvate (PEP) to phosphonopyruvate (P-Pyr). In Mytilus edulis (Blue mussel), this protein is Phosphoenolpyruvate phosphomutase.